The sequence spans 91 residues: NADH-ubiquinone oxidoreductase chain 4L (91 aa).

Helical transmembrane passes span 2–22 and 38–58; these read LIMI…QTHL and LGLG…ALVL.

The protein belongs to the complex I subunit 4L family.

The protein resides in the mitochondrion membrane. It catalyses the reaction a ubiquinone + NADH + 5 H(+)(in) = a ubiquinol + NAD(+) + 4 H(+)(out). Its function is as follows. Core subunit of the mitochondrial membrane respiratory chain NADH dehydrogenase (Complex I) that is believed to belong to the minimal assembly required for catalysis. Complex I functions in the transfer of electrons from NADH to the respiratory chain. The immediate electron acceptor for the enzyme is believed to be ubiquinone. This chain is NADH-ubiquinone oxidoreductase chain 4L (ND4L), found in Branchiostoma floridae (Florida lancelet).